The primary structure comprises 129 residues: Small ribosomal subunit protein uS11 (129 aa).

Belongs to the universal ribosomal protein uS11 family. Part of the 30S ribosomal subunit. Interacts with proteins S7 and S18. Binds to IF-3.

In terms of biological role, located on the platform of the 30S subunit, it bridges several disparate RNA helices of the 16S rRNA. Forms part of the Shine-Dalgarno cleft in the 70S ribosome. This is Small ribosomal subunit protein uS11 from Enterobacter sp. (strain 638).